A 697-amino-acid chain; its full sequence is Pentatricopeptide repeat-containing protein At5g46460, mitochondrial (697 aa).

The N-terminal 36 residues, 1 to 36, are a transit peptide targeting the mitochondrion; it reads MWSRAIFQRFRFRAFSISHVIHGKCYRSFSVTVEFQ. PPR repeat units follow at residues 39–64, 65–95, 96–130, 131–157, 158–192, 193–223, 224–258, 259–289, 290–324, 325–359, 360–390, 391–425, 426–456, and 463–497; these read EVLI…VPSP, HVSL…MPVR, DVVS…SVVS, WTAM…MPVK, DTAA…NVIS, WTTM…CIKS, TSRP…GFLY, EEYV…KVHE, QVAV…SILP, NQST…GLET, DAFV…IFKK, SIVS…NKEP, DEIT…MSSG, and KIQH…PNEM. Residues 498-573 form a type E motif region; sequence VWLALLSACR…KPGSSWVVIR (76 aa). The type E(+) motif stretch occupies residues 574–602; the sequence is GKKHEFFSGDQPHCSRIYEKLEFLREKLK. The interval 603–697 is type DYW motif; it reads ELGYAPDYRS…NGTCSCGDYW (95 aa).

Belongs to the PPR family. PCMP-H subfamily.

The protein resides in the mitochondrion. The protein is Pentatricopeptide repeat-containing protein At5g46460, mitochondrial (PCMP-H49) of Arabidopsis thaliana (Mouse-ear cress).